The following is a 513-amino-acid chain: Bone morphogenetic protein 6 (513 aa).

An N-terminal signal peptide occupies residues 1-20 (MPGLGRRAQWLCWWWGLLCS). A propeptide spanning residues 21 to 374 (CCGPPPLRPP…VSEVHVRTTR (354 aa)) is cleaved from the precursor. 3 disordered regions span residues 38–66 (AAGGQLLGDGGSPGRTEQPPPSPQSSSGF), 89–131 (LPHR…RLKS), and 145–200 (ADND…ASPL). The segment covering 98–121 (GLQQPQPPALRQQEEQQQQQQLPR) has biased composition (low complexity). Positions 158–172 (QQSWPHEAASSSQRR) are enriched in polar residues. 5 N-linked (GlcNAc...) asparagine glycosylation sites follow: Asn-241, Asn-269, Asn-386, Asn-404, and Asn-454. Positions 373-398 (TRSASSRRRQQSRNRSTQSQDVARVS) are disordered. Intrachain disulfides connect Cys-412–Cys-478, Cys-441–Cys-510, and Cys-445–Cys-512.

The protein belongs to the TGF-beta family. Interacts with SOSTDC1. Interacts (when glycosylated) with type I receptor ACVR1; the interaction may induce HAMP expression. Interacts with type II receptor ACVR2B. Interacts with Hemojuvelin/HJV. Interacts with ERFE; the interaction inhibits BMP-induced transcription of HAMP. Interacts with BMPR1A/ALK3. Forms heterodimers with BMP2 in vitro; the heterodimer then binds to its receptor BMPR1A /ALK3 and may induce HAMP expression. Post-translationally, glycosylated at Asn-454. Glycosylation is crucial for recognition by the activin receptor type I/ACVR1.

It is found in the secreted. Its function is as follows. Growth factor of the TGF-beta superfamily that plays essential roles in many developmental processes including cartilage and bone formation. Also plays an important role in the regulation of HAMP/hepcidin expression and iron metabolism by acting as a ligand for hemojuvelin/HJV. Also acts to promote expression of HAMP, potentially via the interaction with its receptor BMPR1A/ALK3. Initiates the canonical BMP signaling cascade by associating with type I receptor ACVR1 and type II receptor ACVR2B. In turn, ACVR1 propagates signal by phosphorylating SMAD1/5/8 that travel to the nucleus and act as activators and repressors of transcription of target. Can also signal through non-canonical pathway such as TAZ-Hippo signaling cascade to modulate VEGF signaling by regulating VEGFR2 expression. The chain is Bone morphogenetic protein 6 (BMP6) from Homo sapiens (Human).